An 883-amino-acid polypeptide reads, in one-letter code: Phosphoenolpyruvate carboxylase (883 aa).

Active-site residues include H138 and K546.

This sequence belongs to the PEPCase type 1 family. The cofactor is Mg(2+).

It catalyses the reaction oxaloacetate + phosphate = phosphoenolpyruvate + hydrogencarbonate. Its function is as follows. Forms oxaloacetate, a four-carbon dicarboxylic acid source for the tricarboxylic acid cycle. The sequence is that of Phosphoenolpyruvate carboxylase from Escherichia coli O45:K1 (strain S88 / ExPEC).